The primary structure comprises 100 residues: Putative protein p52 (100 aa).

The segment at 81–100 (PKSFKSSTDTAHSDRWLSLG) is disordered. A compositionally biased stretch (basic and acidic residues) spans 91 to 100 (AHSDRWLSLG).

This chain is Putative protein p52 (52), found in Escherichia coli (Bacteriophage APSE-1).